A 280-amino-acid polypeptide reads, in one-letter code: Fructose-1,6-bisphosphatase class 1 (280 aa).

4 residues coordinate Mg(2+): Glu-64, Asp-83, Leu-85, and Asp-86. Residues 86–89 (DGSS), Tyr-190, and Lys-221 each bind substrate. Glu-227 is a binding site for Mg(2+).

Belongs to the FBPase class 1 family. Homotetramer. It depends on Mg(2+) as a cofactor.

The protein localises to the cytoplasm. It catalyses the reaction beta-D-fructose 1,6-bisphosphate + H2O = beta-D-fructose 6-phosphate + phosphate. Its pathway is carbohydrate biosynthesis; gluconeogenesis. In Campylobacter hominis (strain ATCC BAA-381 / DSM 21671 / CCUG 45161 / LMG 19568 / NCTC 13146 / CH001A), this protein is Fructose-1,6-bisphosphatase class 1.